A 257-amino-acid polypeptide reads, in one-letter code: Thiazole synthase (257 aa).

The active-site Schiff-base intermediate with DXP is Lys-98. 1-deoxy-D-xylulose 5-phosphate-binding positions include Gly-159, 185 to 186 (AG), and 207 to 208 (NT).

This sequence belongs to the ThiG family. In terms of assembly, homotetramer. Forms heterodimers with either ThiH or ThiS.

The protein localises to the cytoplasm. The enzyme catalyses [ThiS sulfur-carrier protein]-C-terminal-Gly-aminoethanethioate + 2-iminoacetate + 1-deoxy-D-xylulose 5-phosphate = [ThiS sulfur-carrier protein]-C-terminal Gly-Gly + 2-[(2R,5Z)-2-carboxy-4-methylthiazol-5(2H)-ylidene]ethyl phosphate + 2 H2O + H(+). It participates in cofactor biosynthesis; thiamine diphosphate biosynthesis. Its function is as follows. Catalyzes the rearrangement of 1-deoxy-D-xylulose 5-phosphate (DXP) to produce the thiazole phosphate moiety of thiamine. Sulfur is provided by the thiocarboxylate moiety of the carrier protein ThiS. In vitro, sulfur can be provided by H(2)S. The chain is Thiazole synthase from Anaeromyxobacter dehalogenans (strain 2CP-1 / ATCC BAA-258).